We begin with the raw amino-acid sequence, 147 residues long: Large ribosomal subunit protein uL22c (147 aa).

This sequence belongs to the universal ribosomal protein uL22 family. In terms of assembly, part of the 50S ribosomal subunit.

The protein localises to the plastid. It localises to the chloroplast. Functionally, this protein binds specifically to 23S rRNA. Its function is as follows. The globular domain of the protein is located near the polypeptide exit tunnel on the outside of the subunit, while an extended beta-hairpin is found that lines the wall of the exit tunnel in the center of the 70S ribosome. The polypeptide is Large ribosomal subunit protein uL22c (rpl22) (Lolium perenne (Perennial ryegrass)).